The primary structure comprises 192 residues: PBAN-type neuropeptides (192 aa).

Residues 1–23 (MYKTNIVFNVLALALFSIFFASC) form the signal peptide. At Leu-47 the chain carries Leucine amide. A propeptide spanning residues 51–94 (SMKPSTEDNRQTFLRLLEAADALKFYYDQLPYERQADEPETKVT) is cleaved from the precursor. Residues Leu-103, Leu-122, Leu-158, and Leu-168 each carry the leucine amide modification. Residues 171–192 (ELSYDYPTKYRVARSVNKTMDN) constitute a propeptide that is removed on maturation.

The protein belongs to the pyrokinin family. Expression is restricted to the subesophageal ganglion.

It localises to the secreted. A hormone that controls sex pheromone production in females and pheromone responsiveness in male. Also mediates visceral muscle contractile activity (myotropic activity). Identical to MRCH which is implicated in the formation of both melanin in the cuticle and ommochrome in the epidermis of armyworm species. In terms of biological role, diapause hormone (DH) is responsible for induction of embryonic diapause. Its function is as follows. The three SGNPS are far less active than DH in inducing diapause eggs. Beta-SGNP expressed higher pban activity than PBAN-I, but alpha- and gamma-SGNP were far less active in pheromonotropic activity. The chain is PBAN-type neuropeptides from Bombyx mori (Silk moth).